The primary structure comprises 645 residues: Cysteine-rich receptor-like protein kinase 10 (645 aa).

Positions methionine 1 to alanine 27 are cleaved as a signal peptide. Gnk2-homologous domains follow at residues glutamine 28–phenylalanine 132 and serine 140–phenylalanine 251. Over glutamine 28–serine 283 the chain is Extracellular. Residues asparagine 39 and asparagine 91 are each glycosylated (N-linked (GlcNAc...) asparagine). Intrachain disulfides connect cysteine 86-cysteine 95 and cysteine 98-cysteine 123. 2 N-linked (GlcNAc...) asparagine glycosylation sites follow: asparagine 151 and asparagine 169. 2 cysteine pairs are disulfide-bonded: cysteine 204/cysteine 213 and cysteine 216/cysteine 242. The chain crosses the membrane as a helical span at residues alanine 284–phenylalanine 304. Topologically, residues cysteine 305–serine 645 are cytoplasmic. Residues phenylalanine 348–leucine 619 enclose the Protein kinase domain. Residues leucine 354 to valine 362 and lysine 376 contribute to the ATP site. Aspartate 473 functions as the Proton acceptor in the catalytic mechanism.

The protein belongs to the protein kinase superfamily. Ser/Thr protein kinase family. CRK subfamily.

The protein resides in the membrane. Its function is as follows. Involved in disease resistance. Required for NPR1/NH1-mediated immunity to the bacterial blight pathogen Xanthomomas oryzae pv. oryzae (Xoo). Required for the benzothiadiazole (BTH)-induced immune response. Probably regulated by the transcription factor TGA2.1. In Oryza sativa subsp. japonica (Rice), this protein is Cysteine-rich receptor-like protein kinase 10.